A 297-amino-acid polypeptide reads, in one-letter code: uncharacterized protein (297 aa).

The next 5 helical transmembrane spans lie at Tyr-114–Gly-136, Leu-150–Val-170, Met-197–Leu-217, Ala-227–Ile-247, and Phe-269–Leu-289.

Belongs to the ThrE exporter (TC 2.A.79) family.

The protein localises to the cell inner membrane. This is an uncharacterized protein from Haemophilus influenzae (strain ATCC 51907 / DSM 11121 / KW20 / Rd).